The chain runs to 199 residues: MTKVKICGLSTKEAVETAVSAGADYIGFVFAPSKRQVTLEEAAELAKLIPADVKKVGVFVSPSRVELLEAIDKVGLDLVQVHGQVAADLFENLPCASIQAVQVDGNGHVPNSQADYLLFDAPVAGSGQSFDWGQLDTTGLAQPFFIAGGLNEDNVVKAIQHFTPYAVDVSSGVETDGQKDHEKIRRFIERVKHGISGTK.

This sequence belongs to the TrpF family.

The catalysed reaction is N-(5-phospho-beta-D-ribosyl)anthranilate = 1-(2-carboxyphenylamino)-1-deoxy-D-ribulose 5-phosphate. Its pathway is amino-acid biosynthesis; L-tryptophan biosynthesis; L-tryptophan from chorismate: step 3/5. This chain is N-(5'-phosphoribosyl)anthranilate isomerase, found in Streptococcus pneumoniae (strain Taiwan19F-14).